The chain runs to 715 residues: Arginine kinase (715 aa).

2 Approximate repeats span residues 1–366 and 367–715; these read MADP…IAKK and RSVF…KSTK. The region spanning 11–95 is the Phosphagen kinase N-terminal 1 domain; that stretch reads KSKNAFPDPL…FDAIIEDYHS (85 aa). A substrate-binding site is contributed by 68-72; that stretch reads GVGVY. Residues 123–362 enclose the Phosphagen kinase C-terminal 1 domain; the sequence is YIRSTRIRVA…KALMELEKEA (240 aa). Residues 126 to 130 and His189 each bind ATP; that span reads STRIR. Residue Glu229 participates in substrate binding. Residue Arg233 participates in ATP binding. Cys275 lines the substrate pocket. ATP contacts are provided by residues 284–288 and 312–317; these read RASVH and RGIHGE. Residue Glu317 coordinates substrate. Residues 365–447 enclose the Phosphagen kinase N-terminal 2 domain; sequence KKRSVFPEVL…FDKIVEDYHS (83 aa). A Phosphagen kinase C-terminal 2 domain is found at 475–714; the sequence is YIRSTRIRVA…KKLLEIEKST (240 aa).

The protein belongs to the ATP:guanido phosphotransferase family. In terms of assembly, monomer.

It catalyses the reaction L-arginine + ATP = N(omega)-phospho-L-arginine + ADP + H(+). The polypeptide is Arginine kinase (Anthopleura japonica (Sea anemone)).